The following is a 289-amino-acid chain: 4-hydroxy-tetrahydrodipicolinate synthase (289 aa).

Residue threonine 43 coordinates pyruvate. Tyrosine 131 acts as the Proton donor/acceptor in catalysis. The active-site Schiff-base intermediate with substrate is lysine 160. Valine 200 provides a ligand contact to pyruvate.

Belongs to the DapA family. In terms of assembly, homotetramer; dimer of dimers.

The protein localises to the cytoplasm. The catalysed reaction is L-aspartate 4-semialdehyde + pyruvate = (2S,4S)-4-hydroxy-2,3,4,5-tetrahydrodipicolinate + H2O + H(+). It participates in amino-acid biosynthesis; L-lysine biosynthesis via DAP pathway; (S)-tetrahydrodipicolinate from L-aspartate: step 3/4. Catalyzes the condensation of (S)-aspartate-beta-semialdehyde [(S)-ASA] and pyruvate to 4-hydroxy-tetrahydrodipicolinate (HTPA). The polypeptide is 4-hydroxy-tetrahydrodipicolinate synthase (Methanococcus maripaludis (strain C7 / ATCC BAA-1331)).